Reading from the N-terminus, the 42-residue chain is DRDSCVDKSRCQKYGNYAQCTACCKKAGHNKGTCDFFKCKCT.

Intrachain disulfides connect C5–C23, C11–C34, C20–C39, and C24–C41.

This sequence belongs to the ergtoxin family. Gamma-KTx 3 subfamily. In terms of tissue distribution, expressed by the venom gland.

It localises to the secreted. Its function is as follows. Blocks Kv11/ERG potassium channels. The sequence is that of Potassium channel toxin gamma-KTx 3.4 from Centruroides gracilis (Slenderbrown scorpion).